The primary structure comprises 167 residues: Heme-degrading monooxygenase (167 aa).

The tract at residues 1–50 (MKKVFITTGTEHYLRQLMANYTGGNVTLLQNFSQSLLYQESTGEKLFQEG) is important for catalysis. One can recognise an ABM domain in the interval 67 to 154 (VVVFEYIHLR…NNTQSGFSHE (88 aa)).

It belongs to the antibiotic biosynthesis monooxygenase family. In terms of assembly, monomer.

The protein resides in the cytoplasm. Its function is as follows. Catalyzes the degradation of heme to biliverdin in the presence of a suitable electron donor such as ascorbate, with the subsequent release of iron. Hardly any CO is released by the heme degradation reaction. Binds heme. Allows bacterial pathogens to use the host heme as an iron source. Release of iron from heme may play a crucial role in the pathogenicity of L.monocytogenes. This Listeria monocytogenes serovar 1/2a (strain ATCC BAA-679 / EGD-e) protein is Heme-degrading monooxygenase.